We begin with the raw amino-acid sequence, 442 residues long: MALPRSQARGWVKAAKMAQRRRPADDTGGPQSPAPGSQRAALYVHWPYCEKRCSYCNFNKYIPRGVDEAALRRCLVIEAQTLLRLSGVRRVESVFFGGGTPSLASPHTVAAVLEAVAQAAHLPADSEVTLEANPTSASGSRLAAFGAAGVNRLSIGLQSLDDTELQLLGRTHSARDALQTLAEAQRLFPGRVSVDLMLGLPAQQVGPWLRQLQGLLRCCDDHVSLYQLSLERGTTLFTQVQQGALPAPDPELAAEMYQEGRAVLREAGFRQYEVSNFARNGALSTHNWTYWQCGQYLGVGPGAHGRFIPQGAGGHTREARIQTLEPDSWMKEVMLFGHGTRRRVPLSELELLEEVLAMGLRTDVGITHQHWQQFEPQLTLWDLFGASKEVKELQEQGLLLLDHRGLRCSWEGLAVLDSLLLSLLSRLQEAWQQRTPSSVPRG.

A mitochondrion-targeting transit peptide spans 1 to 22; that stretch reads MALPRSQARGWVKAAKMAQRRR. The disordered stretch occupies residues 1–37; it reads MALPRSQARGWVKAAKMAQRRRPADDTGGPQSPAPGS. In terms of domain architecture, Radical SAM core spans 34 to 270; sequence APGSQRAALY…RAVLREAGFR (237 aa). Y43 contacts S-adenosyl-L-methionine. Residues C49, C53, and C56 each contribute to the [4Fe-4S] cluster site. S-adenosyl-L-methionine is bound by residues G98, 99–100, E131, Q158, R170, and D195; that span reads GT.

The protein belongs to the anaerobic coproporphyrinogen-III oxidase family. HemW subfamily. [4Fe-4S] cluster serves as cofactor.

It localises to the mitochondrion. In terms of biological role, may be a heme chaperone, appears to bind heme. Homologous bacterial proteins do not have oxygen-independent coproporphyrinogen-III oxidase activity. Binds 1 [4Fe-4S] cluster. The cluster is coordinated with 3 cysteines and an exchangeable S-adenosyl-L-methionine. The sequence is that of Radical S-adenosyl methionine domain-containing protein 1, mitochondrial (RSAD1) from Bos taurus (Bovine).